The primary structure comprises 264 residues: Probable septum site-determining protein MinC (264 aa).

A disordered region spans residues 103–147 (SHGRRPRGGNDAKDADRNDAQDAQGAPEHAQAAEAPASTSAIPPA). Residues 110–122 (GGNDAKDADRNDA) show a composition bias toward basic and acidic residues. Positions 124–147 (DAQGAPEHAQAAEAPASTSAIPPA) are enriched in low complexity.

Belongs to the MinC family. Interacts with MinD and FtsZ.

Cell division inhibitor that blocks the formation of polar Z ring septums. Rapidly oscillates between the poles of the cell to destabilize FtsZ filaments that have formed before they mature into polar Z rings. Prevents FtsZ polymerization. In Ralstonia pickettii (strain 12J), this protein is Probable septum site-determining protein MinC.